The sequence spans 380 residues: Cytochrome b (380 aa).

A run of 4 helical transmembrane segments spans residues 33-53 (FGSLLGLCLATQILTGLFLAM), 77-98 (WLIRNIHANGASFFFICIYMHI), 113-133 (WNIGVVLLLLTMMTAFVGYVL), and 178-198 (FFAFHFLFPFVIAAATVLHLL). Positions 83 and 97 each coordinate heme b. Histidine 182 and histidine 196 together coordinate heme b. Residue histidine 201 coordinates a ubiquinone. A run of 4 helical transmembrane segments spans residues 226–246 (YKDLLGFVAMLLGLTSLALFA), 288–308 (LGGVLALLFSILVLMVVPILH), 320–340 (LTQFLFWALVADMLILTWIGG), and 347–367 (FIIIGQVASVIYFTIFLVLSP).

The protein belongs to the cytochrome b family. In terms of assembly, the cytochrome bc1 complex contains 3 respiratory subunits (MT-CYB, CYC1 and UQCRFS1), 2 core proteins (UQCRC1 and UQCRC2) and probably 6 low-molecular weight proteins. Requires heme b as cofactor.

It localises to the mitochondrion inner membrane. In terms of biological role, component of the ubiquinol-cytochrome c reductase complex (complex III or cytochrome b-c1 complex) that is part of the mitochondrial respiratory chain. The b-c1 complex mediates electron transfer from ubiquinol to cytochrome c. Contributes to the generation of a proton gradient across the mitochondrial membrane that is then used for ATP synthesis. In Oncorhynchus mykiss (Rainbow trout), this protein is Cytochrome b (mt-cyb).